The chain runs to 259 residues: Global transcriptional regulator CodY (259 aa).

The GAF domain stretch occupies residues 1–155 (MNLLEKTRKI…GATVVGMEIL (155 aa)). The H-T-H motif DNA-binding region spans 203 to 222 (ASKIADRVGITRSVIVNALR). Position 215 is a phosphoserine (Ser215).

Belongs to the CodY family.

The protein localises to the cytoplasm. Functionally, DNA-binding global transcriptional regulator which is involved in the adaptive response to starvation and acts by directly or indirectly controlling the expression of numerous genes in response to nutrient availability. During rapid exponential growth, CodY is highly active and represses genes whose products allow adaptation to nutrient depletion. This chain is Global transcriptional regulator CodY, found in Lysinibacillus sphaericus (strain C3-41).